The following is a 459-amino-acid chain: Zinc finger and BTB domain-containing protein 9 (459 aa).

Residues 48 to 112 form the BTB domain; the sequence is CDVSLLVQGR…IYSGSLHLPL (65 aa). Polar residues predominate over residues 178 to 189; the sequence is VRSSASTENSVL. Disordered stretches follow at residues 178–200 and 212–274; these read VRSS…EGSE and EEEE…ASQI. Glycyl lysine isopeptide (Lys-Gly) (interchain with G-Cter in SUMO2) cross-links involve residues lysine 285, lysine 293, and lysine 368. A disordered region spans residues 293 to 356; it reads KEKTKVLSGE…GGTGQAMHGP (64 aa). A C2H2-type 1 zinc finger spans residues 397–419; sequence FGCGICNKRFKLKHHLTEHMKTH. The C2H2-type 2; atypical zinc-finger motif lies at 424 to 446; sequence HACPHCGRRFRVQAFFLRHRDLC.

Its subcellular location is the nucleus. Functionally, may be involved in transcriptional regulation. The sequence is that of Zinc finger and BTB domain-containing protein 9 (Zbtb9) from Mus musculus (Mouse).